A 426-amino-acid polypeptide reads, in one-letter code: Serine/threonine-protein kinase ssn3 (426 aa).

In terms of domain architecture, Protein kinase spans 41–368 (YHIVGFISSG…AREALEHPYF (328 aa)). ATP is bound by residues 47 to 55 (ISSGTYGRV) and lysine 71. Residue aspartate 173 is the Proton acceptor of the active site. The interval 390–426 (RVTQDDNDIRSGSLPGTKRSGLPDDSLMGRAAKRLKE) is disordered.

The protein belongs to the protein kinase superfamily. CMGC Ser/Thr protein kinase family. CDC2/CDKX subfamily. In terms of assembly, component of the srb8-11 complex, a regulatory module of the Mediator complex. Mg(2+) serves as cofactor.

It is found in the nucleus. The catalysed reaction is L-seryl-[protein] + ATP = O-phospho-L-seryl-[protein] + ADP + H(+). The enzyme catalyses L-threonyl-[protein] + ATP = O-phospho-L-threonyl-[protein] + ADP + H(+). It carries out the reaction [DNA-directed RNA polymerase] + ATP = phospho-[DNA-directed RNA polymerase] + ADP + H(+). Functionally, component of the srb8-11 complex. The srb8-11 complex is a regulatory module of the Mediator complex which is itself involved in regulation of basal and activated RNA polymerase II-dependent transcription. The srb8-11 complex may be involved in the transcriptional repression of a subset of genes regulated by Mediator. It may inhibit the association of the Mediator complex with RNA polymerase II to form the holoenzyme complex. The srb8-11 complex phosphorylates the C-terminal domain (CTD) of the largest subunit of RNA polymerase II. This chain is Serine/threonine-protein kinase ssn3 (ssn3), found in Aspergillus fumigatus (strain ATCC MYA-4609 / CBS 101355 / FGSC A1100 / Af293) (Neosartorya fumigata).